Reading from the N-terminus, the 441-residue chain is Nucleolar and spindle-associated protein 1 (441 aa).

Disordered regions lie at residues 47 to 186 and 216 to 267; these read ARKG…PNFK and MNEL…LGLK. 2 stretches are compositionally biased toward polar residues: residues 56 to 74 and 100 to 116; these read ESQT…ISNQ and DSQQ…PTEF. Over residues 117–126 the composition is skewed to basic and acidic residues; it reads QNHEKQESQD. A Phosphoserine; by ATM modification is found at Ser124. Residue Ser135 is modified to Phosphoserine. Positions 152–171 are enriched in basic and acidic residues; the sequence is RDSKVPSEGKKSLYTDESSK. The residue at position 182 (Thr182) is a Phosphothreonine. Positions 237–382 are interaction with microtubules; the sequence is GRLSVASTPI…HKGKLKPWGQ (146 aa). At Ser240 the chain carries Phosphoserine. Over residues 241 to 264 the composition is skewed to polar residues; that stretch reads VASTPISQRRSQGRSCGPASQSTL. Thr244 carries the post-translational modification Phosphothreonine. Phosphoserine is present on residues Ser247, Ser255, Ser269, Ser276, and Ser311. Positions 286 to 319 are disordered; sequence AATKDNEHKRSLTKTPARKSAHVTVSGGTPKGEA. A phosphothreonine mark is found at Thr314, Thr338, and Thr349. Residues Ser352 and Ser363 each carry the phosphoserine modification. Residues 384–390 carry the KEN box motif; it reads KENNYLN. A disordered region spans residues 401–427; sequence KTYKQPHLQTKEEQRKKREQERKEKKA. A coiled-coil region spans residues 407-432; the sequence is HLQTKEEQRKKREQERKEKKAKVLGM. Residues 409–424 are compositionally biased toward basic and acidic residues; the sequence is QTKEEQRKKREQERKE. An N6-acetyllysine modification is found at Lys411.

The protein belongs to the NUSAP family. Interacts with DNA and microtubules. Microtubule bundling is inhibited by IPO7, KPNA2 and KPNB1 while association with DNA is also inhibited by IPO7 and KPNA2. Post-translationally, ubiquitinated. Ubiquitination by FZR1 may lead to proteasome-dependent degradation of this protein. Phosphorylation by ATM in G2/M-phase induces mitotic arrest.

The protein localises to the cytoplasm. It is found in the nucleus. It localises to the nucleolus. The protein resides in the cytoskeleton. Its subcellular location is the spindle. The protein localises to the chromosome. Microtubule-associated protein with the capacity to bundle and stabilize microtubules. May associate with chromosomes and promote the organization of mitotic spindle microtubules around them. The sequence is that of Nucleolar and spindle-associated protein 1 (NUSAP1) from Homo sapiens (Human).